Reading from the N-terminus, the 620-residue chain is bZIP transcription factor 49 (620 aa).

The Cytoplasmic portion of the chain corresponds to 1-287 (MAEPVLEDTY…VAKVKKFKKV (287 aa)). The span at 109–135 (SSCYNRESPTDSDFSGTSQSLSFSGQD) shows a compositional bias: polar residues. The tract at residues 109 to 155 (SSCYNRESPTDSDFSGTSQSLSFSGQDSAKRKTEIEEDSSDESRRLG) is disordered. The bZIP domain maps to 172–235 (EKKKNVRLVR…VTLRQQMGTR (64 aa)). A basic motif region spans residues 173–205 (KKKNVRLVRNRESAHLSRQRKKHYVEELEDKVK). The segment at 211–218 (ISELSSKM) is leucine-zipper. The helical transmembrane segment at 288–308 (ASFSVFGFLFCMFLFGALVNI) threads the bilayer. At 309–620 (SYGEYKSNYV…RPDVPHLMTS (312 aa)) the chain is on the lumenal side. Disordered stretches follow at residues 343 to 364 (DSDQGVGRNVSETENLGPPRNS), 398 to 460 (ARDS…SNDQ), and 505 to 557 (PASP…RETK). 2 N-linked (GlcNAc...) asparagine glycosylation sites follow: Asn351 and Asn363. The segment covering 352-364 (VSETENLGPPRNS) has biased composition (polar residues). 2 stretches are compositionally biased toward basic and acidic residues: residues 398-409 (ARDSETKNEEGK) and 432-441 (RTRDVSKHLY). Composition is skewed to polar residues over residues 447–460 (GLSSSGSDDASNDQ) and 508–519 (PHTQQCKNTSDT). Asn515 carries an N-linked (GlcNAc...) asparagine glycan. An RRIL cleavage motif motif is present at residues 526-529 (RRIL). 2 N-linked (GlcNAc...) asparagine glycosylation sites follow: Asn539 and Asn546. The segment covering 540–557 (LTKEDHNSSSKDKFRETK) has biased composition (basic and acidic residues).

The protein belongs to the bZIP family. In terms of assembly, interacts with BZIP28.

Its subcellular location is the endoplasmic reticulum membrane. The protein resides in the nucleus. Its function is as follows. Transcriptional activator involved in stress responses. This is bZIP transcription factor 49 from Arabidopsis thaliana (Mouse-ear cress).